The following is a 246-amino-acid chain: Protein PHLOEM PROTEIN 2-LIKE A1 (246 aa).

As to expression, vascular tissues, specifically in phloem companion cell-sieve element complexes.

The protein is Protein PHLOEM PROTEIN 2-LIKE A1 (PP2A1) of Arabidopsis thaliana (Mouse-ear cress).